Here is a 383-residue protein sequence, read N- to C-terminus: Adaptive-response sensory kinase SasA (383 aa).

One can recognise a Histidine kinase domain in the interval 152–365 (MVAHELRTPL…CFTFTVPIWQ (214 aa)). Position 155 is a phosphohistidine; by autocatalysis (His155).

Homooligomerizes. Interacts with KaiC. Participates in the KaiABC clock complex, whose core is composed of a KaiC homohexamer, 6 KaiB and up to 6 KaiA dimers. SasA and KaiB(fs) compete to bind to KaiC.

The catalysed reaction is ATP + protein L-histidine = ADP + protein N-phospho-L-histidine.. Member of the two-component regulatory system SasA/RpaA involved in genome-wide circadian gene expression. One of several clock output pathways. Participates in the Kai clock protein complex, the main circadian regulator in cyanobacteria, via its interaction with KaiC. KaiC enhances the autophosphorylation activity of SasA, which then transfers its phosphate group to RpaA to activate it. In addition to its output function, recruits fold-shifted KaiB (KaiB(fs)) to KaiC to cooperatively form the KaiB(6):KaiC(6) complex (independent of SasA kinase activity). Required for robustness of the circadian rhythm of gene expression and is involved in clock output, also required for adaptation to light/dark cycles. This Parasynechococcus marenigrum (strain WH8102) protein is Adaptive-response sensory kinase SasA.